Here is a 405-residue protein sequence, read N- to C-terminus: Dynactin subunit 2 (405 aa).

A disordered region spans residues 1 to 24; the sequence is MADPKYANLPGIASNEPDVYETSD. Coiled-coil stretches lie at residues 102 to 125 and 379 to 405; these read QQKY…IQTS and QQTM…KLNK.

This sequence belongs to the dynactin subunit 2 family. As to quaternary structure, subunit of dynactin, a multiprotein complex part of a tripartite complex with dynein and a adapter, such as BICDL1, BICD2 or HOOK3. The dynactin complex is built around ACTR1A/ACTB filament and consists of an actin-related filament composed of a shoulder domain, a pointed end and a barbed end. Its length is defined by its flexible shoulder domain. The soulder is composed of 2 DCTN1 subunits, 4 DCTN2 and 2 DCTN3.

It is found in the cytoplasm. The protein localises to the cytoskeleton. The protein resides in the microtubule organizing center. Its subcellular location is the centrosome. It localises to the membrane. Its function is as follows. Part of the dynactin complex that activates the molecular motor dynein for ultra-processive transport along microtubules. In the dynactin soulder domain, binds the ACTR1A filament and acts as a molecular ruler to determine the length. Modulates cytoplasmic dynein binding to an organelle, and plays a role in prometaphase chromosome alignment and spindle organization during mitosis. Involved in anchoring microtubules to centrosomes. The sequence is that of Dynactin subunit 2 (dctn2) from Danio rerio (Zebrafish).